Consider the following 95-residue polypeptide: Small ribosomal subunit protein bS16 (95 aa).

Belongs to the bacterial ribosomal protein bS16 family.

This is Small ribosomal subunit protein bS16 from Roseiflexus sp. (strain RS-1).